Consider the following 484-residue polypeptide: tRNA sulfurtransferase (484 aa).

Positions 61-165 (PLILDLLKRT…GDKMLLVEAR (105 aa)) constitute a THUMP domain. Residues 183–184 (LI), Lys-265, Gly-287, and Gln-296 each bind ATP. Cys-344 and Cys-456 are oxidised to a cystine. The region spanning 404-483 (LTEKDIILDI…YQNVKVFNLP (80 aa)) is the Rhodanese domain. The Cysteine persulfide intermediate role is filled by Cys-456.

This sequence belongs to the ThiI family.

The protein localises to the cytoplasm. It catalyses the reaction [ThiI sulfur-carrier protein]-S-sulfanyl-L-cysteine + a uridine in tRNA + 2 reduced [2Fe-2S]-[ferredoxin] + ATP + H(+) = [ThiI sulfur-carrier protein]-L-cysteine + a 4-thiouridine in tRNA + 2 oxidized [2Fe-2S]-[ferredoxin] + AMP + diphosphate. The catalysed reaction is [ThiS sulfur-carrier protein]-C-terminal Gly-Gly-AMP + S-sulfanyl-L-cysteinyl-[cysteine desulfurase] + AH2 = [ThiS sulfur-carrier protein]-C-terminal-Gly-aminoethanethioate + L-cysteinyl-[cysteine desulfurase] + A + AMP + 2 H(+). The protein operates within cofactor biosynthesis; thiamine diphosphate biosynthesis. Catalyzes the ATP-dependent transfer of a sulfur to tRNA to produce 4-thiouridine in position 8 of tRNAs, which functions as a near-UV photosensor. Also catalyzes the transfer of sulfur to the sulfur carrier protein ThiS, forming ThiS-thiocarboxylate. This is a step in the synthesis of thiazole, in the thiamine biosynthesis pathway. The sulfur is donated as persulfide by IscS. This is tRNA sulfurtransferase from Haemophilus ducreyi (strain 35000HP / ATCC 700724).